The chain runs to 256 residues: Small ribosomal subunit protein eS1 (256 aa).

Basic residues predominate over residues 1-18 (MAVGKNKRLSKGKKGVKK). The interval 1–20 (MAVGKNKRLSKGKKGVKKRT) is disordered. Alanine 2 is subject to N-acetylalanine; partial.

This sequence belongs to the eukaryotic ribosomal protein eS1 family. In terms of assembly, component of the small ribosomal subunit. Mature ribosomes consist of a small (40S) and a large (60S) subunit. The 40S subunit contains about 33 different proteins and 1 molecule of RNA (18S). The 60S subunit contains about 49 different proteins and 3 molecules of RNA (25S, 5.8S and 5S).

It localises to the cytoplasm. The polypeptide is Small ribosomal subunit protein eS1 (rps1) (Aspergillus clavatus (strain ATCC 1007 / CBS 513.65 / DSM 816 / NCTC 3887 / NRRL 1 / QM 1276 / 107)).